The chain runs to 90 residues: Serine-rich and transmembrane domain-containing 2 (90 aa).

An N-linked (GlcNAc...) asparagine glycan is attached at asparagine 11. Residues 38–58 (YVGLFLSLLAILLILLFTMLL) form a helical membrane-spanning segment. The interval 69 to 90 (SDSTESVPQFTDVEMQSRIPTP) is disordered.

Its subcellular location is the membrane. This is Serine-rich and transmembrane domain-containing 2 from Homo sapiens (Human).